A 395-amino-acid polypeptide reads, in one-letter code: Na(+)/H(+) antiporter NhaA (395 aa).

11 helical membrane passes run 15–35 (FLGS…AGFV), 66–86 (IDAW…ILEI), 101–121 (VALP…TYLL), 132–152 (GWAI…LALG), 161–181 (AWLM…IAVF), 184–204 (NALY…LIGA), 219–239 (CILL…AGVI), 265–285 (ALTP…NVGV), 301–321 (LGIM…ATLL), 339–359 (VFGL…IANL), and 366–386 (LVIP…LAGW).

This sequence belongs to the NhaA Na(+)/H(+) (TC 2.A.33) antiporter family.

It is found in the cell inner membrane. It catalyses the reaction Na(+)(in) + 2 H(+)(out) = Na(+)(out) + 2 H(+)(in). Its function is as follows. Na(+)/H(+) antiporter that extrudes sodium in exchange for external protons. The protein is Na(+)/H(+) antiporter NhaA of Gluconacetobacter diazotrophicus (strain ATCC 49037 / DSM 5601 / CCUG 37298 / CIP 103539 / LMG 7603 / PAl5).